We begin with the raw amino-acid sequence, 388 residues long: Large ribosomal subunit protein uL3A (388 aa).

Residues methionine 1 to arginine 10 are compositionally biased toward basic and acidic residues. Positions methionine 1–lysine 34 are disordered. At serine 13 the chain carries Phosphoserine. Residues proline 18–alanine 31 are compositionally biased toward basic residues. Phosphoserine occurs at positions 65, 140, 143, 207, 295, and 355. A Phosphothreonine modification is found at threonine 372.

This sequence belongs to the universal ribosomal protein uL3 family. Component of the large ribosomal subunit (LSU). Mature yeast ribosomes consist of a small (40S) and a large (60S) subunit. The 40S small subunit contains 1 molecule of ribosomal RNA (18S rRNA) and at least 33 different proteins. The large 60S subunit contains 3 rRNA molecules (25S, 5.8S and 5S rRNA) and at least 46 different proteins. uL3 forms together with ES39L one of the contact sites for the signal recognition particle that targets ribosomes to the endoplasmic reticulum membrane.

Its subcellular location is the cytoplasm. Component of the ribosome, a large ribonucleoprotein complex responsible for the synthesis of proteins in the cell. The small ribosomal subunit (SSU) binds messenger RNAs (mRNAs) and translates the encoded message by selecting cognate aminoacyl-transfer RNA (tRNA) molecules. The large subunit (LSU) contains the ribosomal catalytic site termed the peptidyl transferase center (PTC), which catalyzes the formation of peptide bonds, thereby polymerizing the amino acids delivered by tRNAs into a polypeptide chain. The nascent polypeptides leave the ribosome through a tunnel in the LSU and interact with protein factors that function in enzymatic processing, targeting, and the membrane insertion of nascent chains at the exit of the ribosomal tunnel. uL3 plays a role in coordinating processes of accommodating the aminoacyl-tRNA in the PTC. The sequence is that of Large ribosomal subunit protein uL3A (rpl301) from Schizosaccharomyces pombe (strain 972 / ATCC 24843) (Fission yeast).